Consider the following 319-residue polypeptide: Phospho-N-acetylmuramoyl-pentapeptide-transferase (319 aa).

9 helical membrane passes run 5–25, 51–71, 79–99, 119–139, 149–169, 173–193, 197–217, 224–246, and 299–319; these read LIAF…LIIW, TMGG…ICAY, VWIL…DDGL, LLVA…FALY, VVLF…AVNL, LDGL…WLAF, NFGV…FFMF, IFMG…IFLG, and VDLV…MIWG.

This sequence belongs to the glycosyltransferase 4 family. MraY subfamily. Mg(2+) is required as a cofactor.

It is found in the cell membrane. The enzyme catalyses UDP-N-acetyl-alpha-D-muramoyl-L-alanyl-gamma-D-glutamyl-L-lysyl-D-alanyl-D-alanine + di-trans,octa-cis-undecaprenyl phosphate = Mur2Ac(oyl-L-Ala-gamma-D-Glu-L-Lys-D-Ala-D-Ala)-di-trans,octa-cis-undecaprenyl diphosphate + UMP. It participates in cell wall biogenesis; peptidoglycan biosynthesis. Its function is as follows. Catalyzes the initial step of the lipid cycle reactions in the biosynthesis of the cell wall peptidoglycan: transfers peptidoglycan precursor phospho-MurNAc-pentapeptide from UDP-MurNAc-pentapeptide onto the lipid carrier undecaprenyl phosphate, yielding undecaprenyl-pyrophosphoryl-MurNAc-pentapeptide, known as lipid I. This chain is Phospho-N-acetylmuramoyl-pentapeptide-transferase, found in Lactobacillus delbrueckii subsp. bulgaricus (strain ATCC BAA-365 / Lb-18).